The sequence spans 313 residues: Ribosomal protein L11 methyltransferase (313 aa).

4 residues coordinate S-adenosyl-L-methionine: Thr-164, Gly-185, Asp-207, and Asn-249.

This sequence belongs to the methyltransferase superfamily. PrmA family.

Its subcellular location is the cytoplasm. It catalyses the reaction L-lysyl-[protein] + 3 S-adenosyl-L-methionine = N(6),N(6),N(6)-trimethyl-L-lysyl-[protein] + 3 S-adenosyl-L-homocysteine + 3 H(+). Its function is as follows. Methylates ribosomal protein L11. The protein is Ribosomal protein L11 methyltransferase of Clostridium perfringens (strain 13 / Type A).